Here is a 542-residue protein sequence, read N- to C-terminus: Esterase 6 (542 aa).

The N-terminal stretch at 1 to 19 (MNYVGLIIVLSCLWLGSNA) is a signal peptide. The N-linked (GlcNAc...) asparagine glycan is linked to Asn40. Cysteines 84 and 103 form a disulfide. Ser207 (acyl-ester intermediate) is an active-site residue. A disulfide bridge connects residues Cys259 and Cys271. Asn418 and Asn454 each carry an N-linked (GlcNAc...) asparagine glycan. His464 acts as the Charge relay system in catalysis. Cys512 and Cys533 are joined by a disulfide.

This sequence belongs to the type-B carboxylesterase/lipase family. Monomer.

The protein localises to the secreted. The catalysed reaction is a carboxylic ester + H2O = an alcohol + a carboxylate + H(+). In terms of biological role, transferred from the ejaculatory bulbs of males to the female genitals upon copulation, plays an important role in the reproductive biology. The sequence is that of Esterase 6 (Est-6) from Drosophila simulans (Fruit fly).